A 406-amino-acid chain; its full sequence is Phosphopentomutase (406 aa).

6 residues coordinate Mn(2+): Asp10, Asp305, His310, Asp346, His347, and His358.

The protein belongs to the phosphopentomutase family. The cofactor is Mn(2+).

Its subcellular location is the cytoplasm. The enzyme catalyses 2-deoxy-alpha-D-ribose 1-phosphate = 2-deoxy-D-ribose 5-phosphate. The catalysed reaction is alpha-D-ribose 1-phosphate = D-ribose 5-phosphate. Its pathway is carbohydrate degradation; 2-deoxy-D-ribose 1-phosphate degradation; D-glyceraldehyde 3-phosphate and acetaldehyde from 2-deoxy-alpha-D-ribose 1-phosphate: step 1/2. Its function is as follows. Isomerase that catalyzes the conversion of deoxy-ribose 1-phosphate (dRib-1-P) and ribose 1-phosphate (Rib-1-P) to deoxy-ribose 5-phosphate (dRib-5-P) and ribose 5-phosphate (Rib-5-P), respectively. This Aliivibrio fischeri (strain MJ11) (Vibrio fischeri) protein is Phosphopentomutase.